Reading from the N-terminus, the 828-residue chain is Putative dual specificity tyrosine-phosphorylation-regulated kinase 3 homolog (828 aa).

Residues 1–14 (MVGSQEKKNNHIEL) are compositionally biased toward basic and acidic residues. A disordered region spans residues 1–26 (MVGSQEKKNNHIELSETPATDKNNLN). Over residues 17 to 26 (TPATDKNNLN) the composition is skewed to polar residues. Residues 276-589 (YEMLKIIGKG…PSEALKHPWL (314 aa)) enclose the Protein kinase domain. ATP contacts are provided by residues 282 to 290 (IGKGSFGQV) and Lys-305. Asp-402 functions as the Proton acceptor in the catalytic mechanism. Ser-616 bears the Phosphoserine mark.

It belongs to the protein kinase superfamily. CMGC Ser/Thr protein kinase family. MNB/DYRK subfamily. In terms of processing, autophosphorylated on tyrosine residues.

The enzyme catalyses L-seryl-[protein] + ATP = O-phospho-L-seryl-[protein] + ADP + H(+). It catalyses the reaction L-threonyl-[protein] + ATP = O-phospho-L-threonyl-[protein] + ADP + H(+). It carries out the reaction L-tyrosyl-[protein] + ATP = O-phospho-L-tyrosyl-[protein] + ADP + H(+). This Drosophila melanogaster (Fruit fly) protein is Putative dual specificity tyrosine-phosphorylation-regulated kinase 3 homolog (Dyrk3).